Consider the following 218-residue polypeptide: Small ribosomal subunit protein uS3c (218 aa).

Positions 47 to 118 (VQNNIRISSG…KLNIAITRIS (72 aa)) constitute a KH type-2 domain.

It belongs to the universal ribosomal protein uS3 family. As to quaternary structure, part of the 30S ribosomal subunit.

It localises to the plastid. Its subcellular location is the chloroplast. This Draba nemorosa (Woodland whitlowgrass) protein is Small ribosomal subunit protein uS3c (rps3).